The primary structure comprises 247 residues: 3-deoxy-manno-octulosonate cytidylyltransferase (247 aa).

It belongs to the KdsB family.

The protein localises to the cytoplasm. The catalysed reaction is 3-deoxy-alpha-D-manno-oct-2-ulosonate + CTP = CMP-3-deoxy-beta-D-manno-octulosonate + diphosphate. Its pathway is nucleotide-sugar biosynthesis; CMP-3-deoxy-D-manno-octulosonate biosynthesis; CMP-3-deoxy-D-manno-octulosonate from 3-deoxy-D-manno-octulosonate and CTP: step 1/1. The protein operates within bacterial outer membrane biogenesis; lipopolysaccharide biosynthesis. Activates KDO (a required 8-carbon sugar) for incorporation into bacterial lipopolysaccharide in Gram-negative bacteria. In Methylorubrum extorquens (strain PA1) (Methylobacterium extorquens), this protein is 3-deoxy-manno-octulosonate cytidylyltransferase.